A 287-amino-acid chain; its full sequence is NAD-dependent protein deacylase sir-2.3 (287 aa).

The Deacetylase sirtuin-type domain maps to 10-287 (TELCENSLKK…YRISDVLKEM (278 aa)). Residues 35–55 (GAGI…VGLY) and 116–119 (QNVD) each bind NAD(+). The active-site Proton acceptor is the H134. Residues C142, C145, C196, and C199 each coordinate Zn(2+). Residues 236–238 (GTS), 262–264 (NIG), and I280 each bind NAD(+).

It belongs to the sirtuin family. Class II subfamily. Interacts with pyc-1, pcca-1 and mccc-1. The cofactor is Zn(2+). As to expression, ubiquitously expressed with high expression in the pharynx, body wall muscles and gonad. Strong expression in a subset of non-neuronal cells in the head.

The protein localises to the mitochondrion matrix. Its subcellular location is the mitochondrion. The catalysed reaction is N(6)-acetyl-L-lysyl-[protein] + NAD(+) + H2O = 2''-O-acetyl-ADP-D-ribose + nicotinamide + L-lysyl-[protein]. NAD-dependent protein deacylase. Catalyzes the NAD-dependent hydrolysis of acyl groups from lysine residues. Plays a role in oxidative stress resistance. Might promote neuronal cell death under ischemic conditions and cell death in touch neurons induced by mec-4 channel hyperactivation, possibly downstream of the insulin-like receptor daf-2. Might attenuate the reactive oxygen species (ROS) scavenging system, that eliminates ROS in ischemic conditions, under dietary deprivation and when glycolysis is blocked. This Caenorhabditis elegans protein is NAD-dependent protein deacylase sir-2.3 (sir-2.3).